A 232-amino-acid polypeptide reads, in one-letter code: MEYPTPLTPARMVQRYKRFLSDVTLADGTQVTAHCANSGSMRGLVHVGEPVYLSHSDNPKRKLAWTLELVCDGGALVGVNTGLANALVAEALQQDRIPPLQGFAHFRREVPYQDSRLDFCLTAPAGALTYVEVKSVTLRLTDEAAFPDAVTKRGAKHLAALRHAVKAGHRGVILFIVQRSDLDHFRPAHEIDPGYAQTLQWAISEGVEILVYACALTTASIYVERPLSYTLG.

The protein belongs to the SfsA family.

This Magnetococcus marinus (strain ATCC BAA-1437 / JCM 17883 / MC-1) protein is Sugar fermentation stimulation protein homolog.